The following is a 688-amino-acid chain: Collagen alpha-2(IX) chain (688 aa).

The signal sequence occupies residues 1 to 22 (MAPAADPRSLLVLLQVLGLALA). Residues 26–162 (GLPGEPGPPG…PGKPGRPGTI (137 aa)) are triple-helical region 4 (COL4). Disordered stretches follow at residues 26–520 (GLPG…RDAS), 549–578 (GATGMMGPPGPPGPPGYPGKQGPHGHPGPR), and 590–662 (IGNT…LPGF). 2 stretches are compositionally biased toward pro residues: residues 30 to 42 (EPGPPGPPGPPGV) and 105 to 126 (LPGPPGLPGPGFAGPPGPPGPV). Positions 128 to 138 (LPGEIGLTGPK) are enriched in low complexity. The span at 143–156 (PEGPSGPPGPPGKP) shows a compositional bias: pro residues. A 4-hydroxyproline modification is found at Pro-159. The nonhelical region 4 (NC4) stretch occupies residues 163–179 (QGLEGSADFLCPTNCPA). Residue Ser-168 is glycosylated (O-linked (Xyl...) (glycosaminoglycan) serine). Residues 180–518 (GVKGPPGLQG…PGRQGVAGRD (339 aa)) are triple-helical region 3 (COL3). A 5-hydroxylysine modification is found at Lys-182. An O-linked (Gal...) hydroxylysine glycan is attached at Lys-182. 2 stretches are compositionally biased toward low complexity: residues 251–265 (KGMVGSVGAAGSPGE) and 394–412 (PVGQPGPQGRQGPKGEQGP). A compositionally biased stretch (gly residues) spans 435–444 (GPRGGVGDPG). A compositionally biased stretch (low complexity) spans 497 to 506 (RGLVGDRGLP). The segment at 519 to 548 (ASDQHIEDVVLKMLQEQLAEMAVSAKREAL) is nonhelical region 3 (NC3). Residues 549 to 631 (GATGMMGPPG…PGLPGRPGQA (83 aa)) are triple-helical region 2 (COL2). Pro residues predominate over residues 556-565 (PPGPPGPPGY). Positions 598 to 610 (KRGEKGDQGEVGR) are enriched in basic and acidic residues. A nonhelical region 2 (NC2) region spans residues 632-633 (IN). The tract at residues 634 to 663 (GKDGDRGAPGAPGEAGRPGLPGPIGLPGFC) is triple-helical region 1 (COL1). The span at 641 to 651 (APGAPGEAGRP) shows a compositional bias: low complexity. The segment at 664 to 688 (EPAACLGASAYASGRLTEPGSIKGP) is nonhelical region 1 (NC1).

The protein belongs to the fibril-associated collagens with interrupted helices (FACIT) family. Heterotrimer of an alpha 1(IX), an alpha 2(IX) and an alpha 3(IX) chain. The chains are linked to each other by interchain disulfide bonds. Trimers are also cross-linked via hydroxylysines. In terms of processing, prolines at the third position of the tripeptide repeating unit (G-X-Y) are hydroxylated in some or all of the chains. Post-translationally, covalently linked to the telopeptides of type II collagen by hydroxylysine-derived cross-links.

The protein localises to the secreted. The protein resides in the extracellular space. It is found in the extracellular matrix. Its function is as follows. Structural component of hyaline cartilage and vitreous of the eye. This Bos taurus (Bovine) protein is Collagen alpha-2(IX) chain.